The chain runs to 456 residues: Antizyme inhibitor 2 (456 aa).

Residue Cys357 is the Proton donor; shared with dimeric partner of the active site.

The protein belongs to the Orn/Lys/Arg decarboxylase class-II family. ODC antizyme inhibitor subfamily. Monomer. Interacts with OAZ1; this interaction disrupts the interaction between the antizyme and ODC1. Does not form a heterodimer with ODC1.

It localises to the nucleus. It is found in the cytoplasm. The protein resides in the perinuclear region. Its subcellular location is the membrane. The protein localises to the cytoplasmic vesicle. It localises to the endoplasmic reticulum-Golgi intermediate compartment. It is found in the golgi apparatus. The protein resides in the cis-Golgi network. Its subcellular location is the trans-Golgi network. The protein localises to the cytoplasmic granule. It localises to the cell projection. It is found in the axon. The protein resides in the dendrite. Its subcellular location is the perikaryon. Its function is as follows. Antizyme inhibitor (AZI) protein that positively regulates ornithine decarboxylase (ODC) activity and polyamine uptake. AZI is an enzymatically inactive ODC homolog that counteracts the negative effect of ODC antizyme (AZ) on ODC activity by competing with ODC for antizyme-binding. Inhibits antizyme-dependent ODC degradation and releases ODC monomers from their inactive complex with antizymes, leading to formation of the catalytically active ODC homodimer and restoring polyamine production. Participates in the morphological integrity of the trans-Golgi network (TGN) and functions as a regulator of intracellular secretory vesicle trafficking. This Xenopus laevis (African clawed frog) protein is Antizyme inhibitor 2 (azin2).